The primary structure comprises 113 residues: MAAQVVPVLSKLFDDYQKTTSSKLKIIDAYMTYILFTGIFQFIYCLLVGTFPFNSFLSGFISTVTSFVLASCLRMQVNQENRSEFTAVSTERAFADFIFANLILHLVVVNFLG.

At 1-32 (MAAQVVPVLSKLFDDYQKTTSSKLKIIDAYMT) the chain is on the cytoplasmic side. A helical transmembrane segment spans residues 33-53 (YILFTGIFQFIYCLLVGTFPF). Residues 54–55 (NS) lie on the Lumenal side of the membrane. The chain crosses the membrane as a helical span at residues 56-78 (FLSGFISTVTSFVLASCLRMQVN). Over 79 to 92 (QENRSEFTAVSTER) the chain is Cytoplasmic. The helical transmembrane segment at 93–113 (AFADFIFANLILHLVVVNFLG) threads the bilayer.

Belongs to the DAD/OST2 family. Component of the oligosaccharyltransferase (OST) complex.

Its subcellular location is the endoplasmic reticulum membrane. Its pathway is protein modification; protein glycosylation. In terms of biological role, subunit of the oligosaccharyl transferase (OST) complex that catalyzes the initial transfer of a defined glycan (Glc(3)Man(9)GlcNAc(2) in eukaryotes) from the lipid carrier dolichol-pyrophosphate to an asparagine residue within an Asn-X-Ser/Thr consensus motif in nascent polypeptide chains, the first step in protein N-glycosylation. N-glycosylation occurs cotranslationally and the complex associates with the Sec61 complex at the channel-forming translocon complex that mediates protein translocation across the endoplasmic reticulum (ER). All subunits are required for a maximal enzyme activity. Possesses cell death-inhibiting activity. Suppresses some programmed cell death in C.elegans. The polypeptide is Dolichyl-diphosphooligosaccharide--protein glycosyltransferase subunit dad-1 (Caenorhabditis elegans).